The chain runs to 143 residues: Large ribosomal subunit protein uL15 (143 aa).

A disordered region spans residues 20 to 52 (GRGIGSGKGKTAGRGHKGQHSRAGGYHKVGFEG). Over residues 30–39 (TAGRGHKGQH) the composition is skewed to basic residues.

Belongs to the universal ribosomal protein uL15 family. Part of the 50S ribosomal subunit.

Binds to the 23S rRNA. The protein is Large ribosomal subunit protein uL15 of Coxiella burnetii (strain CbuK_Q154) (Coxiella burnetii (strain Q154)).